The sequence spans 874 residues: GRB2-associated and regulator of MAPK protein 2 (874 aa).

The CABIT stretch occupies residues 12-339; the sequence is RWSMGAFPLD…LLAGDPRVER (328 aa). Residues 188-206 show a composition bias toward gly residues; it reads GGGGPASAGAAGGTGGGGA. Disordered stretches follow at residues 188–207, 388–422, 437–545, 563–598, and 625–742; these read GGGG…GGAR, PGLA…EPAA, GPEG…SPSP, GESS…AASL, and APFG…PSKA. Composition is skewed to low complexity over residues 388 to 403 and 518 to 545; these read PGLA…APAG and SPSS…SPSP. Positions 575–585 are enriched in polar residues; the sequence is PSTTQPSQASR. Composition is skewed to low complexity over residues 632 to 650 and 658 to 691; these read PFSG…SSGP and ATSG…SSSS. The residue at position 735 (Ser735) is a Phosphoserine. The SAM domain maps to 807–871; that stretch reads SALSLEEVSR…KIMQFIKGWR (65 aa).

Belongs to the GAREM family.

Its function is as follows. Probable adapter protein that may provide a link between cell surface epidermal growth factor receptor and the MAPK/ERK signaling pathway. This Homo sapiens (Human) protein is GRB2-associated and regulator of MAPK protein 2 (GAREM2).